An 841-amino-acid chain; its full sequence is MKLWIHLFYSSLLACISLHSQTPVLSSRGSCDSLCNCEEKDGTMLINCEAKGIKMVSEISVPPSRPFQLSLLNNGLTMLHTNDFSGLTNAISIHLGFNNIADIEIGAFNGLGLLKQLHINHNSLEILKEDTFHGLENLEFLQADNNFITVIEPSAFSKLNRLKVLILNDNAIESLPPNIFRFVPLTHLDLRGNQLQTLPYVGFLEHIGRILDLQLEDNKWACNCDLLQLKTWLENMPPQSIIGDVVCNSPPFFKGSILSRLKKESICPTPPVYEEHEDPSGSLHLAATSSINDSRMSTKTTSILKLPTKAPGLIPYITKPSTQLPGPYCPIPCNCKVLSPSGLLIHCQERNIESLSDLRPPPQNPRKLILAGNIIHSLMKSDLVEYFTLEMLHLGNNRIEVLEEGSFMNLTRLQKLYLNGNHLTKLSKGMFLGLHNLEYLYLEYNAIKEILPGTFNPMPKLKVLYLNNNLLQVLPPHIFSGVPLTKVNLKTNQFTHLPVSNILDDLDLLTQIDLEDNPWDCSCDLVGLQQWIQKLSKNTVTDDILCTSPGHLDKKELKALNSEILCPGLVNNPSMPTQTSYLMVTTPATTTNTADTILRSLTDAVPLSVLILGLLIMFITIVFCAAGIVVLVLHRRRRYKKKQVDEQMRDNSPVHLQYSMYGHKTTHHTTERPSASLYEQHMVSPMVHVYRSPSFGPKHLEEEEERNEKEGSDAKHLQRSLLEQENHSPLTGSNMKYKTTNQSTEFLSFQDASSLYRNILEKERELQQLGITEYLRKNIAQLQPDMEAHYPGAHEELKLMETLMYSRPRKVLVEQTKNEYFELKANLHAEPDYLEVLEQQT.

An N-terminal signal peptide occupies residues 1–26; sequence MKLWIHLFYSSLLACISLHSQTPVLS. Residues 27-67 enclose the LRRNT 1 domain; sequence SRGSCDSLCNCEEKDGTMLINCEAKGIKMVSEISVPPSRPF. Residues 27–608 lie on the Extracellular side of the membrane; it reads SRGSCDSLCN…RSLTDAVPLS (582 aa). LRR repeat units follow at residues 89–110, 113–134, 137–158, 161–182, and 184–205; these read NAIS…AFNG, LLKQ…TFHG, NLEF…AFSK, RLKV…IFRF, and PLTH…GFLE. An LRRCT 1 domain is found at 218-269; that stretch reads NKWACNCDLLQLKTWLENMPPQSIIGDVVCNSPPFFKGSILSRLKKESICPT. An LRRNT 2 domain is found at 320–361; that stretch reads PSTQLPGPYCPIPCNCKVLSPSGLLIHCQERNIESLSDLRPP. 6 LRR repeats span residues 364-385, 388-409, 412-433, 436-457, 460-481, and 483-504; these read NPRK…DLVE, TLEM…SFMN, RLQK…MFLG, NLEY…TFNP, KLKV…IFSG, and PLTK…NILD. The LRRCT 2 domain maps to 517 to 568; sequence NPWDCSCDLVGLQQWIQKLSKNTVTDDILCTSPGHLDKKELKALNSEILCPG. Residues 609–629 traverse the membrane as a helical segment; sequence VLILGLLIMFITIVFCAAGIV. The Cytoplasmic segment spans residues 630–841; that stretch reads VLVLHRRRRY…DYLEVLEQQT (212 aa).

Belongs to the SLITRK family. In adult brain, highly expressed in putamen with no expression in cerebral cortex. Expressed in adult and fetal lung and fetal liver. Also expressed at high levels in some brain tumors including medulloblastomas and primitive neuroectodermal tumors.

It localises to the cell membrane. Functionally, regulator of neurite outgrowth required for normal hearing and vision. The chain is SLIT and NTRK-like protein 6 (SLITRK6) from Homo sapiens (Human).